Here is a 189-residue protein sequence, read N- to C-terminus: Protein CURLY FLAG LEAF 1 (189 aa).

The short motif at 50–55 (TLELNS) is the EAR element. Residues 57-91 (LSLPCHWEQCLDLKTGEIYYINWKNGMRVKEDPRK) form the WW domain. The disordered stretch occupies residues 90 to 148 (RKVMNADPDSGDSYGTVCSEEDSSYYDSEESSSESSPSSRENHKEEEEEEEEEEEEEED). Acidic residues-rich tracts occupy residues 108-121 (SEED…EESS) and 135-148 (EEEE…EEED).

As to quaternary structure, interacts with BHLH122/CFLAP1 and BHLH80/CFLAP2. Binds to HDG1. Mostly observed in roots, flowers and siliques. Expressed in cells differentiated from epidermal cells such as trichomes, stigmatic papillar cells and guard cells, as well as in tissues undergoing abscission and dehiscence.

In terms of biological role, negatively regulates the cuticle development by interacting with the HD-ZIP IV transcription factor HDG1. This is Protein CURLY FLAG LEAF 1 from Arabidopsis thaliana (Mouse-ear cress).